The following is a 64-amino-acid chain: Mitotic-spindle organizing protein 1 (64 aa).

This sequence belongs to the MOZART1 family. Part of the gamma-tubulin complex. Interacts directly with alp6/GPC3.

Its subcellular location is the cytoplasm. It is found in the cytoskeleton. It localises to the microtubule organizing center. The protein resides in the spindle pole body. Functionally, required for gamma-tubulin complex recruitment to the microtubule organizing center (MTOC). This chain is Mitotic-spindle organizing protein 1 (mzt1), found in Schizosaccharomyces pombe (strain 972 / ATCC 24843) (Fission yeast).